The primary structure comprises 487 residues: DNA polymerase delta small subunit (487 aa).

An N-acetylmethionine modification is found at Met-1. Ser-20 is modified (phosphoserine).

It belongs to the DNA polymerase delta/II small subunit family. As to quaternary structure, DNA polymerase delta is a heterotrimer of POL3, POL32 and HYS2.

It localises to the nucleus. It carries out the reaction DNA(n) + a 2'-deoxyribonucleoside 5'-triphosphate = DNA(n+1) + diphosphate. Its function is as follows. DNA polymerase delta (DNA polymerase III) participates in chromosomal DNA replication. It is required during synthesis of the leading and lagging DNA strands at the replication fork and binds at/or near replication origins and moves along DNA with the replication fork. It has 3'-5' proofreading exonuclease activity that correct errors arising during DNA replication. It is also involved in DNA synthesis during DNA repair. This is DNA polymerase delta small subunit (POL31) from Saccharomyces cerevisiae (strain ATCC 204508 / S288c) (Baker's yeast).